We begin with the raw amino-acid sequence, 130 residues long: uncharacterized protein (130 aa).

The interval 1–104 (MRPGSSPRAP…RGRWGLRGGP (104 aa)) is disordered. The segment covering 88-97 (RRQPGPQRGR) has biased composition (low complexity).

This is an uncharacterized protein from Homo sapiens (Human).